Reading from the N-terminus, the 495-residue chain is 4-aminobutyrate aminotransferase (495 aa).

160-161 (GS) provides a ligand contact to pyridoxal 5'-phosphate. R216 provides a ligand contact to substrate. K350 bears the N6-(pyridoxal phosphate)lysine mark. T374 serves as a coordination point for pyridoxal 5'-phosphate.

It belongs to the class-III pyridoxal-phosphate-dependent aminotransferase family. As to quaternary structure, homodimer. Requires pyridoxal 5'-phosphate as cofactor.

The enzyme catalyses 4-aminobutanoate + 2-oxoglutarate = succinate semialdehyde + L-glutamate. The protein is 4-aminobutyrate aminotransferase (gabT) of Dictyostelium discoideum (Social amoeba).